The chain runs to 383 residues: tRNA(Met) cytidine acetate ligase (383 aa).

Residues 7–20, G101, N153, and 178–179 each bind ATP; these read IAEF…HEFL and RI.

This sequence belongs to the TmcAL family.

The protein localises to the cytoplasm. It catalyses the reaction cytidine(34) in elongator tRNA(Met) + acetate + ATP = N(4)-acetylcytidine(34) in elongator tRNA(Met) + AMP + diphosphate. Catalyzes the formation of N(4)-acetylcytidine (ac(4)C) at the wobble position of elongator tRNA(Met), using acetate and ATP as substrates. First activates an acetate ion to form acetyladenylate (Ac-AMP) and then transfers the acetyl group to tRNA to form ac(4)C34. The sequence is that of tRNA(Met) cytidine acetate ligase from Lactobacillus acidophilus (strain ATCC 700396 / NCK56 / N2 / NCFM).